The primary structure comprises 452 residues: UDP-glycosyltransferase 79B11 (452 aa).

Residues S260, 319-325 (VQQPSWQ), 340-348 (HCGFGSMWE), and 362-365 (LNDQ) each bind UDP-alpha-D-glucose.

This sequence belongs to the UDP-glycosyltransferase family.

The polypeptide is UDP-glycosyltransferase 79B11 (UGT79B11) (Arabidopsis thaliana (Mouse-ear cress)).